The primary structure comprises 196 residues: Imidazoleglycerol-phosphate dehydratase (196 aa).

Belongs to the imidazoleglycerol-phosphate dehydratase family.

The protein resides in the cytoplasm. The catalysed reaction is D-erythro-1-(imidazol-4-yl)glycerol 3-phosphate = 3-(imidazol-4-yl)-2-oxopropyl phosphate + H2O. It functions in the pathway amino-acid biosynthesis; L-histidine biosynthesis; L-histidine from 5-phospho-alpha-D-ribose 1-diphosphate: step 6/9. The protein is Imidazoleglycerol-phosphate dehydratase of Lachnoclostridium phytofermentans (strain ATCC 700394 / DSM 18823 / ISDg) (Clostridium phytofermentans).